A 710-amino-acid chain; its full sequence is mRNA export factor crp79 (710 aa).

2 RRM domains span residues 19–102 (IYVG…KLTI) and 222–292 (HFKQ…PTTP). A compositionally biased stretch (polar residues) spans 333 to 348 (QWGSVSTTGVSNQQNH). Positions 333–357 (QWGSVSTTGVSNQQNHPAAWNPDNK) are disordered. The 74-residue stretch at 401–474 (EDLFSPFGSI…DRIRRLQAFF (74 aa)) folds into the RRM 3 domain. The segment covering 502–524 (TIRKPIESSTNKISENPTTLSSK) has biased composition (polar residues). Residues 502–544 (TIRKPIESSTNKISENPTTLSSKVENKNEPKTGENKEPSQTNE) form a disordered region. Basic and acidic residues predominate over residues 525 to 538 (VENKNEPKTGENKE).

The protein localises to the cytoplasm. Its subcellular location is the nucleus. Its function is as follows. Binds the poly(A) tail of mRNA. Involved in the export of mRNA from the nucleus to the cytoplasm. The sequence is that of mRNA export factor crp79 (crp79) from Schizosaccharomyces pombe (strain 972 / ATCC 24843) (Fission yeast).